Here is a 479-residue protein sequence, read N- to C-terminus: Glutamate--tRNA ligase (479 aa).

Residues 21–31 carry the 'HIGH' region motif; that stretch reads PSPTGYLHVGG. Residues 248–252 carry the 'KMSKS' region motif; the sequence is KLSKR. Lysine 251 lines the ATP pocket.

Belongs to the class-I aminoacyl-tRNA synthetase family. Glutamate--tRNA ligase type 1 subfamily. As to quaternary structure, monomer.

The protein localises to the cytoplasm. It carries out the reaction tRNA(Glu) + L-glutamate + ATP = L-glutamyl-tRNA(Glu) + AMP + diphosphate. Functionally, catalyzes the attachment of glutamate to tRNA(Glu) in a two-step reaction: glutamate is first activated by ATP to form Glu-AMP and then transferred to the acceptor end of tRNA(Glu). The protein is Glutamate--tRNA ligase of Actinobacillus pleuropneumoniae serotype 7 (strain AP76).